Here is a 391-residue protein sequence, read N- to C-terminus: Ectodysplasin-A (391 aa).

Over residues 1-21 (MGYPEVERREPLPAAAPRERG) the composition is skewed to basic and acidic residues. The disordered stretch occupies residues 1–28 (MGYPEVERREPLPAAAPRERGSQGCGCR). Residues 1–41 (MGYPEVERREPLPAAAPRERGSQGCGCRGAPARAGEGNSCR) are Cytoplasmic-facing. The helical; Signal-anchor for type II membrane protein transmembrane segment at 42 to 62 (LFLGFFGLSLALHLLTLCCYL) threads the bilayer. Residues 63–391 (ELRSELRRER…AIRLGEAPAS (329 aa)) are Extracellular-facing. 2 disordered regions span residues 72-129 (RGTE…DSQD) and 146-244 (YSEE…TGTR). The segment covering 86–96 (TSGTLSSPGSL) has biased composition (low complexity). The region spanning 180–229 (GPPGPNGPPGPPGPPGPQGPPGIPGIPGIPGTTVMGPPGPPGPPGPQGPP) is the Collagen-like domain. Composition is skewed to pro residues over residues 181–203 (PPGP…PGIP) and 216–228 (PPGP…PQGP). The 137-residue stretch at 249-385 (AVVHLQGQGS…HTTFFGAIRL (137 aa)) folds into the THD domain. N-linked (GlcNAc...) asparagine glycosylation occurs at Asn-313. An intrachain disulfide couples Cys-332 to Cys-346. Asn-372 carries an N-linked (GlcNAc...) asparagine glycan.

Belongs to the tumor necrosis factor family. In terms of assembly, homotrimer. The homotrimers may then dimerize and form higher-order oligomers. In terms of processing, N-glycosylated. Processing by furin produces a secreted form.

It localises to the cell membrane. It is found in the secreted. Cytokine which is involved in epithelial-mesenchymal signaling during morphogenesis of ectodermal organs. Functions as a ligand activating the DEATH-domain containing receptors EDAR and EDA2R. Isoform TAA binds only to the receptor EDAR, while isoform TA-A2 binds exclusively to the receptor EDA2R. May also play a role in cell adhesion. Functionally, isoform TAA binds only to the receptor EDAR, while isoform TA-A2 binds exclusively to the receptor EDA2R. Its function is as follows. Isoform TA-A2 binds exclusively to the receptor EDA2R. This is Ectodysplasin-A (Eda) from Mus musculus (Mouse).